A 290-amino-acid chain; its full sequence is Multiple sugar-binding transport system permease protein MsmF (290 aa).

7 helical membrane passes run 12 to 32, 72 to 92, 104 to 124, 156 to 176, 201 to 221, 231 to 253, and 260 to 280; these read GWTFLIVPLILQVVFFYFPMF, FTLVLTLALIVGEIVLGIIIA, FFRAWFFFPAVLSGLTVSLIF, VIASIFVLLWQGVAMPIILFL, FWSVELPYLLPSISMVFIMAL, IFALTGGGPNNSTTSLGLLVYNY, and YGYANAIALILFIIIGIVSVL. The region spanning 70-281 is the ABC transmembrane type-1 domain; sequence IGFTLVLTLA…IIIGIVSVLQ (212 aa).

This sequence belongs to the binding-protein-dependent transport system permease family. MalFG subfamily.

The protein localises to the cell membrane. In terms of biological role, involved in a binding protein-dependent transport system responsible for the uptake of melibiose, raffinose and isomaltotriose. The protein is Multiple sugar-binding transport system permease protein MsmF (msmF) of Streptococcus mutans serotype c (strain ATCC 700610 / UA159).